The chain runs to 975 residues: Nesprin-3 (975 aa).

Residues 1-925 (MTQQPQEDFE…PCSLLQKACR (925 aa)) lie on the Cytoplasmic side of the membrane. Spectrin repeat units follow at residues 220 to 325 (QDHE…RLRG) and 647 to 740 (REHC…QALR). Residues 778-798 (LINPQDPIPRRQHGANPLEGH) form a disordered region. The region spanning 917–975 (CSLLQKACRVALPLQLLLLLFLLLLFLLPAGEEERSCALANNFARSFALMLRYNGPPPT) is the KASH domain. A helical; Anchor for type IV membrane protein transmembrane segment spans residues 926–946 (VALPLQLLLLLFLLLLFLLPA). Topologically, residues 947 to 975 (GEEERSCALANNFARSFALMLRYNGPPPT) are perinuclear space.

Belongs to the nesprin family. Core component of LINC complexes which are composed of inner nuclear membrane SUN domain-containing proteins coupled to outer nuclear membrane KASH domain-containing nesprins. SUN and KASH domain-containing proteins seem to bind each other promiscuously; however, differentially expression of LINC complex constituents can give rise to specific assemblies. Interacts with SUN1 and SUN2; probably forming respective LINC complexes. Interacts with PLEC (via actin-binding domain). Interacts with DST. Interacts with SYNE1. Interacts (via KASH domain) with TOR1A (ATP-bound); the interaction is required for SYNE3 nuclear envelope localization. In terms of processing, the disulfid bond with SUN1 or SUN2 is required for stability of the respective LINC complex under tensile forces. Ubiquitous.

The protein localises to the nucleus outer membrane. Its subcellular location is the nucleus envelope. The protein resides in the rough endoplasmic reticulum. As a component of the LINC (LInker of Nucleoskeleton and Cytoskeleton) complex involved in the connection between the nuclear lamina and the cytoskeleton. The nucleocytoplasmic interactions established by the LINC complex play an important role in the transmission of mechanical forces across the nuclear envelope and in nuclear movement and positioning. Probable anchoring protein which tethers the nucleus to the cytoskeleton by binding PLEC which can associate with the intermediate filament system. Plays a role in the regulation of aortic epithelial cell morphology, and is required for flow-induced centrosome polarization and directional migration in aortic endothelial cells. This chain is Nesprin-3 (Syne3), found in Mus musculus (Mouse).